A 478-amino-acid polypeptide reads, in one-letter code: Membrane-bound lytic murein transglycosylase F (478 aa).

The N-terminal stretch at 1–22 (MTRFLFAIILGLLLTACQQETV) is a signal peptide. The non-LT domain stretch occupies residues 23-257 (EETEFVPHKL…HLNEKYFGHV (235 aa)). An LT domain region spans residues 258–478 (KRFDYIDTRA…PGTLSPDKPK (221 aa)). Glu302 is a catalytic residue. The segment at 447–478 (KQQNSEEVAPSDLTAEETPVPAPGTLSPDKPK) is disordered.

The protein in the N-terminal section; belongs to the bacterial solute-binding protein 3 family. In the C-terminal section; belongs to the transglycosylase Slt family.

It localises to the cell outer membrane. It catalyses the reaction Exolytic cleavage of the (1-&gt;4)-beta-glycosidic linkage between N-acetylmuramic acid (MurNAc) and N-acetylglucosamine (GlcNAc) residues in peptidoglycan, from either the reducing or the non-reducing ends of the peptidoglycan chains, with concomitant formation of a 1,6-anhydrobond in the MurNAc residue.. Its function is as follows. Murein-degrading enzyme that degrades murein glycan strands and insoluble, high-molecular weight murein sacculi, with the concomitant formation of a 1,6-anhydromuramoyl product. Lytic transglycosylases (LTs) play an integral role in the metabolism of the peptidoglycan (PG) sacculus. Their lytic action creates space within the PG sacculus to allow for its expansion as well as for the insertion of various structures such as secretion systems and flagella. The polypeptide is Membrane-bound lytic murein transglycosylase F (Shewanella oneidensis (strain ATCC 700550 / JCM 31522 / CIP 106686 / LMG 19005 / NCIMB 14063 / MR-1)).